Consider the following 96-residue polypeptide: Small ribosomal subunit protein bS18 (96 aa).

Positions 1-22 are enriched in basic and acidic residues; that stretch reads MYKDVDSHQRDSRSDGHQDGFK. Residues 1-25 are disordered; the sequence is MYKDVDSHQRDSRSDGHQDGFKKNP.

It belongs to the bacterial ribosomal protein bS18 family. In terms of assembly, part of the 30S ribosomal subunit. Forms a tight heterodimer with protein bS6.

Binds as a heterodimer with protein bS6 to the central domain of the 16S rRNA, where it helps stabilize the platform of the 30S subunit. The protein is Small ribosomal subunit protein bS18 of Borrelia hermsii (strain HS1 / DAH).